We begin with the raw amino-acid sequence, 339 residues long: Protein H339R (339 aa).

This sequence belongs to the asfivirus H339R family. As to quaternary structure, interacts with NACA (alpha chain of nascent polypeptide-associated complex).

It localises to the host cytoplasm. The protein localises to the host nucleus. It is found in the virion. The protein is Protein H339R of Ornithodoros (relapsing fever ticks).